The following is a 96-amino-acid chain: Tenecin-3 (96 aa).

Residues 1 to 18 (MKTFVICLILVVAVSAAP) form the signal peptide. Residues 19 to 96 (DHHDGHLGGH…HQGGYKTHGH (78 aa)) are disordered. A run of 12 repeats spans residues 23–26 (GHLG), 31–34 (GHQG), 35–38 (GQQG), 39–42 (GHLG), 43–46 (GQQG), 47–50 (GHLG), 51–54 (GHQG), 59–62 (GHLG), 63–66 (GHQG), 67–70 (GIGG), 77–80 (GQHG), and 86–89 (GHQG). A 12 X 4 AA repeats of G-X-X-G region spans residues 23–89 (GHLGGHQTGH…GPGTGAGHQG (67 aa)). The segment covering 26 to 89 (GGHQTGHQGG…GPGTGAGHQG (64 aa)) has biased composition (gly residues).

It to H.diomphalia holotricin 3.

It is found in the secreted. Its function is as follows. Antifungal heat stable protein produced in response to injury. It is active against C.albicans. No antibacterial activity against Gram-positive and Gram-negative bacteria. The chain is Tenecin-3 from Tenebrio molitor (Yellow mealworm beetle).